We begin with the raw amino-acid sequence, 427 residues long: Enolase (427 aa).

Residue Gln-163 participates in (2R)-2-phosphoglycerate binding. The Proton donor role is filled by Glu-205. Mg(2+) contacts are provided by Asp-242, Glu-285, and Asp-312. Residues Lys-337, Arg-366, Ser-367, and Lys-388 each contribute to the (2R)-2-phosphoglycerate site. The active-site Proton acceptor is the Lys-337.

This sequence belongs to the enolase family. Mg(2+) is required as a cofactor.

It localises to the cytoplasm. The protein resides in the secreted. Its subcellular location is the cell surface. It catalyses the reaction (2R)-2-phosphoglycerate = phosphoenolpyruvate + H2O. It functions in the pathway carbohydrate degradation; glycolysis; pyruvate from D-glyceraldehyde 3-phosphate: step 4/5. Catalyzes the reversible conversion of 2-phosphoglycerate (2-PG) into phosphoenolpyruvate (PEP). It is essential for the degradation of carbohydrates via glycolysis. This chain is Enolase, found in Burkholderia ambifaria (strain MC40-6).